We begin with the raw amino-acid sequence, 525 residues long: Cytochrome P450 monooxygenase ltmJ (525 aa).

The helical transmembrane segment at 21–43 (LTWWQTIVSFIIFCIMCSWLPGN) threads the bilayer. A glycan (N-linked (GlcNAc...) asparagine) is linked at N136. A heme-binding site is contributed by C465.

Belongs to the cytochrome P450 family. Heme is required as a cofactor.

The protein resides in the membrane. Its pathway is secondary metabolite biosynthesis. Functionally, cytochrome P450 monooxygenase; part of the gene clusters that mediates the biosynthesis of lolitrems, indole-diterpene mycotoxins that are potent tremorgens in mammals, and are synthesized by clavicipitaceous fungal endophytes in association with their grass hosts. The geranylgeranyl diphosphate (GGPP) synthase ltmG is proposed to catalyze the first step in lolitrem biosynthesis. LtmG catalyzes a series of iterative condensations of isopentenyl diphosphate (IPP) with dimethylallyl diphosphate (DMAPP), geranyl diphosphate (GPP), and farnesyl diphosphate (FPP), to form GGPP. GGPP then condenses with indole-3-glycerol phosphate to form 3-geranylgeranylindole, an acyclic intermediate, to be incorporated into paxilline. Either ltmG or ltmC could be responsible for this step, as both are putative prenyl transferases. The FAD-dependent monooxygenase ltmM then catalyzes the epoxidation of the two terminal alkenes of the geranylgeranyl moiety, which is subsequently cyclized by ltmB, to paspaline. The cytochrome P450 monooxygenases ltmQ and ltmP can sequentially oxidize paspaline to terpendole E and terpendole F. Alternatively, ltmP converts paspaline to an intermediate which is oxidized by ltmQ to terpendole F. LtmF, ltmK, ltmE and ltmJ appear to be unique to the epichloe endophytes. The prenyltransferase ltmF is involved in the 27-hydroxyl-O-prenylation. The cytochrome P450 monooxygenase ltmK is required for the oxidative acetal ring formation. The multi-functional prenyltransferase ltmE is required for C20- and C21-prenylations of the indole ring of paspalanes and acts together with the cytochrome P450 monooxygenase ltmJ to yield lolitremanes by multiple oxidations and ring closures. The stereoisomer pairs of lolitriol and lolitrem N or lolitrem B and lolitrem F may be attributed to variations in the way in which ring closure can occur under the action of ltmJ. While the major product of this pathway is lolitrem B, the prenyl transferases and cytochrome P450 monooxygenases identified in this pathway have a remarkable versatility in their regio- and stereo-specificities to generate a diverse range of metabolites that are products of a metabolic grid rather than a linear pathway. The sequence is that of Cytochrome P450 monooxygenase ltmJ (ltmJ) from Epichloe festucae var. lolii (Neotyphodium lolii).